A 179-amino-acid chain; its full sequence is ATLSAGQPASLTEAEPNTEKATLHRHPAPKRRGKCSDFSPSFATLICLGLRTDLAFGPVRRNSRRSEPLSGSQPRPPIVTGETFELQVHQRFPLRHPAPAPVYTLRRPVQRACGGPIGPRELSKWMTGTAECPTVKSPHPPEQTANRRTPSRVRRSRRPSPSGSLLLATSRISKKSTCR.

The span at 1–10 (ATLSAGQPAS) shows a compositional bias: polar residues. Disordered stretches follow at residues 1–35 (ATLS…RGKC), 59–80 (VRRN…PIVT), and 131–179 (ECPT…STCR). The span at 23–33 (LHRHPAPKRRG) shows a compositional bias: basic residues. Basic residues predominate over residues 149 to 158 (TPSRVRRSRR).

This is an uncharacterized protein from Human cytomegalovirus (strain AD169) (HHV-5).